The primary structure comprises 370 residues: ATP/GTP phosphatase (370 aa).

The catalysed reaction is ATP + H2O = ADP + phosphate + H(+). The enzyme catalyses GTP + H2O = GDP + phosphate + H(+). Has nucleotide phosphatase activity toward ATP and GTP, but not toward CTP, TTP and ADP. The sequence is that of ATP/GTP phosphatase from Helicobacter pylori (strain ATCC 700392 / 26695) (Campylobacter pylori).